A 592-amino-acid chain; its full sequence is Bifunctional purine biosynthesis protein ATIC (592 aa).

Met1 bears the N-acetylmethionine mark. The 145-residue stretch at 2–146 folds into the MGS-like domain; it reads APGQLALFSV…KNHARVTVVC (145 aa). The interval 2–198 is IMP cyclohydrolase; sequence APGQLALFSV…ISDYFRKQYS (197 aa). IMP is bound by residues 12 to 14, 34 to 37, 64 to 67, 101 to 102, and 125 to 126; these read SDK, SGGT, RVKT, CN, and DI. Residue Lys137 is the Proton donor/acceptor; for FAICAR cyclization activity of the active site. The residue at position 199 (Lys199) is an N6-acetyllysine. Residues 199 to 592 are AICAR formyltransferase; that stretch reads KGVSQMPLRY…AHTNLRLFHH (394 aa). Residues 207–208, His267, Gly316, Asp339, Asn431, and Arg451 each bind 5-amino-1-(5-phospho-beta-D-ribosyl)imidazole-4-carboxamide; that span reads RY. The Proton acceptor; for AICAR formyltransferase activity role is filled by His267. Ile452 contributes to the (6R)-10-formyltetrahydrofolate binding site. Position 541 (Phe541) interacts with 5-amino-1-(5-phospho-beta-D-ribosyl)imidazole-4-carboxamide. (6R)-10-formyltetrahydrofolate-binding positions include Asp546 and 565–566; that span reads SA. Arg588 lines the 5-amino-1-(5-phospho-beta-D-ribosyl)imidazole-4-carboxamide pocket.

The protein belongs to the PurH family. In terms of assembly, homodimer. Associates with internalized INSR complexes on Golgi/endosomal membranes. Interacts with INSR; ATIC together with PRKAA2/AMPK2 and HACD3/PTPLAD1 is proposed to be part of a signaling network regulating INSR autophosphorylation and endocytosis. As to expression, present in the heart, brain, placenta, lung, liver, skeletal muscle, kidney, pancreas.

The protein resides in the cytoplasm. The protein localises to the cytosol. The catalysed reaction is (6R)-10-formyltetrahydrofolate + 5-amino-1-(5-phospho-beta-D-ribosyl)imidazole-4-carboxamide = 5-formamido-1-(5-phospho-D-ribosyl)imidazole-4-carboxamide + (6S)-5,6,7,8-tetrahydrofolate. It carries out the reaction 10-formyldihydrofolate + 5-amino-1-(5-phospho-beta-D-ribosyl)imidazole-4-carboxamide = 5-formamido-1-(5-phospho-D-ribosyl)imidazole-4-carboxamide + 7,8-dihydrofolate. It catalyses the reaction IMP + H2O = 5-formamido-1-(5-phospho-D-ribosyl)imidazole-4-carboxamide. The enzyme catalyses 5-amino-1-(5-phospho-D-ribosyl)imidazole-4-thiocarboxamide + 10-formyldihydrofolate = 6-thio-IMP + 7,8-dihydrofolate + H2O. The protein operates within purine metabolism; IMP biosynthesis via de novo pathway; 5-formamido-1-(5-phospho-D-ribosyl)imidazole-4-carboxamide from 5-amino-1-(5-phospho-D-ribosyl)imidazole-4-carboxamide (10-formyl THF route): step 1/1. It participates in purine metabolism; IMP biosynthesis via de novo pathway; IMP from 5-formamido-1-(5-phospho-D-ribosyl)imidazole-4-carboxamide: step 1/1. AMP and XMP inhibit AICAR formyltransferase activity. AICAR formyltransferase activity is inhibited by N-(6-fluoro-1-oxo-1,2-dihydroisoquinolin-7-yl)-5- [(3R)-3-hydroxypyrrolidin-1-yl]thiophene-2-sulfonamide (LSN 3213128), which acts as a tumor suppression in cancer cell lines. Its function is as follows. Bifunctional enzyme that catalyzes the last two steps of purine biosynthesis. Acts as a transformylase that incorporates a formyl group to the AMP analog AICAR (5-amino-1-(5-phospho-beta-D-ribosyl)imidazole-4-carboxamide) to produce the intermediate formyl-AICAR (FAICAR). Can use both 10-formyldihydrofolate and 10-formyltetrahydrofolate as the formyl donor in this reaction. Also catalyzes the cyclization of FAICAR to inosine monophosphate (IMP). Is able to convert thio-AICAR to 6-mercaptopurine ribonucleotide, an inhibitor of purine biosynthesis used in the treatment of human leukemias. Promotes insulin receptor/INSR autophosphorylation and is involved in INSR internalization. In Homo sapiens (Human), this protein is Bifunctional purine biosynthesis protein ATIC.